The sequence spans 288 residues: CBY1-interacting BAR domain-containing protein 2 (288 aa).

Residues 6-217 are BAR-like; sequence SRDSQVRVME…ESYDLEKDLE (212 aa). 2 disordered regions span residues 133-157 and 256-288; these read QKSPSDRQTISQAETSVQRASVDAS and TIRSQRKEAVSEDDSAEEDPVEDLRGQAQRLNQ. Residues 138–157 show a composition bias toward polar residues; it reads DRQTISQAETSVQRASVDAS. The segment covering 266–276 has biased composition (acidic residues); the sequence is SEDDSAEEDPV.

It belongs to the CIBAR family. In terms of assembly, homodimer (via BAR-like domain). Heterodimer (via BAR-like domain) with FAM92A. Interacts with CBY1.

It is found in the cytoplasm. It localises to the cytoskeleton. The protein resides in the microtubule organizing center. Its subcellular location is the centrosome. The protein localises to the centriole. It is found in the cilium basal body. May play a role in ciliogenesis. In cooperation with CBY1 may facilitate ciliogenesis likely by the recruitment and fusion of endosomal vesicles at distal appendages during early stages of ciliogenesis. This chain is CBY1-interacting BAR domain-containing protein 2 (CIBAR2), found in Bos taurus (Bovine).